A 173-amino-acid chain; its full sequence is Protein FAM180A (173 aa).

The signal sequence occupies residues 1-17; sequence MSWKALTILLVFSSTQA.

The protein belongs to the FAM180 family.

It is found in the secreted. The polypeptide is Protein FAM180A (Fam180a) (Mus musculus (Mouse)).